A 484-amino-acid polypeptide reads, in one-letter code: Cobyric acid synthase (484 aa).

The 188-residue stretch at 251-438 (ALKVAVPVLS…LHGLFGSDAY (188 aa)) folds into the GATase cobBQ-type domain. Cys-333 acts as the Nucleophile in catalysis. His-430 is a catalytic residue.

The protein belongs to the CobB/CobQ family. CobQ subfamily.

It functions in the pathway cofactor biosynthesis; adenosylcobalamin biosynthesis. Its function is as follows. Catalyzes amidations at positions B, D, E, and G on adenosylcobyrinic A,C-diamide. NH(2) groups are provided by glutamine, and one molecule of ATP is hydrogenolyzed for each amidation. This Rhizobium meliloti (strain 1021) (Ensifer meliloti) protein is Cobyric acid synthase.